The primary structure comprises 296 residues: Chondrolectin (296 aa).

Positions 1–20 (MRATLRILCALTFLVSCSRG) are cleaved as a signal peptide. The Extracellular portion of the chain corresponds to 21–238 (ARVVSGQTVC…RLIIAGPSSM (218 aa)). One can recognise a C-type lectin domain in the interval 38 to 187 (CYKIAYFKDV…CNMKHNFICK (150 aa)). The span at 197 to 221 (VQSDRPGGHDVDLSTEDKEDRRTPP) shows a compositional bias: basic and acidic residues. The segment at 197 to 229 (VQSDRPGGHDVDLSTEDKEDRRTPPTDEDESPR) is disordered. Residues 239 to 266 (LLIYVIIPTIPLLLLILVASGTCCFQML) traverse the membrane as a helical segment. Residues 267–296 (SKSKPRTKTSVNQSTLWISKTPKIDSGMEV) lie on the Cytoplasmic side of the membrane.

In terms of tissue distribution, expressed in developing motor neurons.

It localises to the membrane. Functionally, plays a role in the development of the nervous system such as in neurite outgrowth and elongation. Involved in motor axon growth and guidance. Required for correct interactions of motor axons with the horizontal myoseptum. In Danio rerio (Zebrafish), this protein is Chondrolectin (chodl).